Consider the following 338-residue polypeptide: Glutaminase (338 aa).

Substrate contacts are provided by S80, N130, E174, N181, Y205, Y257, and V275.

It belongs to the glutaminase family. Homotetramer.

The catalysed reaction is L-glutamine + H2O = L-glutamate + NH4(+). This chain is Glutaminase, found in Microcystis aeruginosa (strain NIES-843 / IAM M-2473).